Consider the following 481-residue polypeptide: Glutamate--tRNA ligase (481 aa).

The 'HIGH' region motif lies at P9–T19. A 'KMSKS' region motif is present at residues K249 to R253. Position 252 (K252) interacts with ATP.

Belongs to the class-I aminoacyl-tRNA synthetase family. Glutamate--tRNA ligase type 1 subfamily. As to quaternary structure, monomer.

Its subcellular location is the cytoplasm. It catalyses the reaction tRNA(Glu) + L-glutamate + ATP = L-glutamyl-tRNA(Glu) + AMP + diphosphate. Its function is as follows. Catalyzes the attachment of glutamate to tRNA(Glu) in a two-step reaction: glutamate is first activated by ATP to form Glu-AMP and then transferred to the acceptor end of tRNA(Glu). The sequence is that of Glutamate--tRNA ligase from Picosynechococcus sp. (strain ATCC 27264 / PCC 7002 / PR-6) (Agmenellum quadruplicatum).